The chain runs to 480 residues: Iroquois-class homeodomain protein IRX-1 (480 aa).

A DNA-binding region (homeobox; TALE-type) is located at residues 125–188 (YGDPGRPKNA…ANARRRLKKE (64 aa)). 3 disordered regions span residues 190–268 (KVTW…QGSP), 280–354 (SPLG…PLQH), and 401–480 (PHGP…LPSA). The segment covering 210-228 (TEGDPEKAEDDEEIDLESI) has biased composition (acidic residues). The segment covering 229-239 (DIDKIDEHDGD) has biased composition (basic and acidic residues). Phosphoserine is present on serine 241. Composition is skewed to low complexity over residues 252-262 (PHAPAAPSALA) and 340-351 (HPGAHGPSAGAP). Over residues 404-417 (PHLPAPPPPQPPVA) the composition is skewed to pro residues.

Belongs to the TALE/IRO homeobox family.

The protein resides in the nucleus. This is Iroquois-class homeodomain protein IRX-1 (IRX1) from Homo sapiens (Human).